The following is a 172-amino-acid chain: Disulfide bond formation protein B (172 aa).

Over 1–11 the chain is Cytoplasmic; it reads MNPFRWSFRAQ. The chain crosses the membrane as a helical span at residues 12–28; that stretch reads FLLGFLACAGLLAYAIY. The Periplasmic portion of the chain corresponds to 29–46; sequence VQLHLGLEPCPLCIFQRI. Cys38 and Cys41 are oxidised to a cystine. A helical membrane pass occupies residues 47-63; it reads AFAALAMFFLLGALHGP. Over 64–70 the chain is Cytoplasmic; the sequence is RAAAGRK. Residues 71-88 form a helical membrane-spanning segment; sequence VYGVLSFIAAGVGMGIAA. The Periplasmic segment spans residues 89 to 145; sequence RHVWVQIRPKDMMSSCGPPLSFLSETMGPFEVFRTVLTGTGDCGNIDWRFLGLSMPM. A disulfide bridge connects residues Cys104 and Cys131. The helical transmembrane segment at 146-164 threads the bilayer; that stretch reads WSMVWFVGLALWALYAGFK. The Cytoplasmic portion of the chain corresponds to 165–172; it reads ARRSSVHH.

It belongs to the DsbB family.

The protein localises to the cell inner membrane. Its function is as follows. Required for disulfide bond formation in some periplasmic proteins. Acts by oxidizing the DsbA protein. The chain is Disulfide bond formation protein B from Xanthomonas euvesicatoria pv. vesicatoria (strain 85-10) (Xanthomonas campestris pv. vesicatoria).